Reading from the N-terminus, the 338-residue chain is Aspartate-semialdehyde dehydrogenase (338 aa).

NADP(+)-binding positions include 13 to 16 and 41 to 42; these read TGAV and RS. Residue arginine 101 coordinates phosphate. The active-site Acyl-thioester intermediate is the cysteine 130. Glutamine 157 is a binding site for substrate. 160–161 contacts NADP(+); sequence SG. Residue lysine 214 participates in phosphate binding. Arginine 236 is a substrate binding site. Residue histidine 243 is the Proton acceptor of the active site. Glutamine 316 is a binding site for NADP(+).

It belongs to the aspartate-semialdehyde dehydrogenase family. As to quaternary structure, homodimer.

It catalyses the reaction L-aspartate 4-semialdehyde + phosphate + NADP(+) = 4-phospho-L-aspartate + NADPH + H(+). Its pathway is amino-acid biosynthesis; L-lysine biosynthesis via DAP pathway; (S)-tetrahydrodipicolinate from L-aspartate: step 2/4. It participates in amino-acid biosynthesis; L-methionine biosynthesis via de novo pathway; L-homoserine from L-aspartate: step 2/3. It functions in the pathway amino-acid biosynthesis; L-threonine biosynthesis; L-threonine from L-aspartate: step 2/5. Catalyzes the NADPH-dependent formation of L-aspartate-semialdehyde (L-ASA) by the reductive dephosphorylation of L-aspartyl-4-phosphate. In Synechocystis sp. (strain ATCC 27184 / PCC 6803 / Kazusa), this protein is Aspartate-semialdehyde dehydrogenase (asd).